A 186-amino-acid chain; its full sequence is Ribosome-recycling factor (186 aa).

Belongs to the RRF family.

It is found in the cytoplasm. Responsible for the release of ribosomes from messenger RNA at the termination of protein biosynthesis. May increase the efficiency of translation by recycling ribosomes from one round of translation to another. This chain is Ribosome-recycling factor, found in Brucella abortus (strain S19).